Reading from the N-terminus, the 67-residue chain is UPF0519 protein C (67 aa).

A disordered region spans residues 18-37 (KSQANLNSNSTNSPNNVQGL). The segment covering 22–33 (NLNSNSTNSPNN) has biased composition (low complexity).

It belongs to the UPF0519 family.

The polypeptide is UPF0519 protein C (Dictyostelium discoideum (Social amoeba)).